The sequence spans 192 residues: Ribonuclease HII (192 aa).

Residues 2–187 enclose the RNase H type-2 domain; sequence KNLCGIDEAG…KALGENEIGV (186 aa). Residues Asp-8, Glu-9, and Asp-97 each coordinate a divalent metal cation.

It belongs to the RNase HII family. Mn(2+) is required as a cofactor. It depends on Mg(2+) as a cofactor.

Its subcellular location is the cytoplasm. The catalysed reaction is Endonucleolytic cleavage to 5'-phosphomonoester.. Endonuclease that specifically degrades the RNA of RNA-DNA hybrids. This Aliarcobacter butzleri (strain RM4018) (Arcobacter butzleri) protein is Ribonuclease HII.